A 485-amino-acid chain; its full sequence is MATAPGERLQEEARCSVCLDFLQEPISVDCGHSFCLRCISEFCEKSDSAQGVYACPQCRGPFRPASFRPNRQLASLVDSVRQLGLGTGHAGSRQCARHGEDLSHFCEEDQTMLCWVCDTSPEHRSHRTETLQEAASRYQRMLRASLELVKKEMEEALTQEANVGKKTIIWKEKVEMQRQRFRLEFEKHRGFLAQEEQLQLRRLEEEERATLQRLRDSRNRLAQQNKALKELAEELEERSQRPAPGLLEGARGVLTRCEAITRLEPEAVPMDLKTVCRIPGMREMLRKFQVDVKLDPATAHPSLLLTADLRSVQDAEVWRDVPSNPERFDTWPCILGLQGFSSGRHYWEVIVGERAEWGLGVCRDSVLRKGETTPSPENGVWAMWLLRGNEYMVLSSPSVPVLQDERPRRIGIFLDYEAGEISFYNVTNGSYIYTFNHLFSGVLRPYFFVCDTTPLILPPMTEAAPGNWTPRGIFDLAAAARNEEY.

The segment at 15-59 adopts an RING-type zinc-finger fold; that stretch reads CSVCLDFLQEPISVDCGHSFCLRCISEFCEKSDSAQGVYACPQCR. The segment at 90–131 adopts a B box-type zinc-finger fold; that stretch reads AGSRQCARHGEDLSHFCEEDQTMLCWVCDTSPEHRSHRTETL. Zn(2+) is bound by residues cysteine 95, histidine 98, cysteine 117, and histidine 123. A coiled-coil region spans residues 192–241; the sequence is LAQEEQLQLRRLEEEERATLQRLRDSRNRLAQQNKALKELAEELEERSQR. A B30.2/SPRY domain is found at 271–466; sequence DLKTVCRIPG…LPPMTEAAPG (196 aa).

Belongs to the TRIM/RBCC family. In terms of tissue distribution, expressed in erythroblasts.

The catalysed reaction is S-ubiquitinyl-[E2 ubiquitin-conjugating enzyme]-L-cysteine + [acceptor protein]-L-lysine = [E2 ubiquitin-conjugating enzyme]-L-cysteine + N(6)-ubiquitinyl-[acceptor protein]-L-lysine.. It functions in the pathway protein modification; protein ubiquitination. Its function is as follows. E3 ubiquitin ligase induced during late erythropoiesis. Directly binds and ubiquitinates the intermediate chain of the microtubule motor dynein (DYNC1LI1/DYNC1LI2), stimulating the degradation of the dynein holoprotein complex. May participate in the erythroblast enucleation process through regulation of nuclear polarization. The protein is E3 ubiquitin-protein ligase TRIM58 (Trim58) of Mus musculus (Mouse).